Consider the following 103-residue polypeptide: Serine protease inhibitor 4 (103 aa).

C56 and C73 are joined by a disulfide.

It belongs to the protease inhibitor I3 (leguminous Kunitz-type inhibitor) family.

The protein resides in the vacuole. In terms of biological role, inhibitor of serine protease. May protect the plant by inhibiting proteases of invading organisms. In Solanum tuberosum (Potato), this protein is Serine protease inhibitor 4.